Reading from the N-terminus, the 335-residue chain is UPF0353 protein Mjls_2492 (335 aa).

Helical transmembrane passes span 18-38 and 67-87; these read WFFL…IVAL and LPAI…AGPT. The 197-residue stretch at 98–294 folds into the VWFA domain; that stretch reads VVMLVIDVSQ…EQLREVYANL (197 aa). A helical membrane pass occupies residues 309–329; the sequence is VGWLRLGALVLALSALAALLL.

Belongs to the UPF0353 family.

The protein resides in the cell membrane. The sequence is that of UPF0353 protein Mjls_2492 from Mycobacterium sp. (strain JLS).